The primary structure comprises 414 residues: Stork-head box protein ham-1 (414 aa).

The segment at 1–31 (MTYLAVVLNGPKAKNGRKVFDSFLEQNRQMF) is essential for association with cell cortex. Residues 93-170 (QQVEQMHFVP…MADHYFVSVP (78 aa)) enclose the Winged helix Storkhead-box1 domain. A disordered region spans residues 282–362 (ECQRKARRRN…SNEEAGSISD (81 aa)). The tract at residues 285-295 (RKARRRNHPRR) is bi-partite nuclear localization signal. The nuclear localization signal stretch occupies residues 321 to 327 (PTRRRAR). Polar residues predominate over residues 332–351 (LRSSTPNNSDSAYSISPPHT).

It is found in the cytoplasm. The protein localises to the cell cortex. It localises to the nucleus. Its function is as follows. Probable transcription factor. Required for asymmetric cell division in neuroblasts, perhaps acting by regulating spindle positioning and myosin polarization, and thus the position of the cleavage plane. Required to produce daughter cell size asymmetry in neuroblasts undergoing asymmetric cell division, usually giving rise to one precursor cell and one apoptotic cell. Positively modulates expression of the serine/threonine kinase pig-1/MELK during asymmetric division of the Q.a neuroblast. Plays a role in neural fate specification in several dopaminergic lineages, including the hermaphrodite-specific neuron (HSN)/phasmid neuron (PHB), acting in concert with the kinase, ham-1, and the T-box protein tbx-2 and the homeobox protein egl-5. In Caenorhabditis elegans, this protein is Stork-head box protein ham-1.